The sequence spans 510 residues: DAP3-binding cell death enhancer 1 (510 aa).

A mitochondrion-targeting transit peptide spans 1 to 23 (MWRLTGILGRALPRLLGPGFRGI). 2 disordered regions span residues 19–61 (GFRG…SRDP) and 142–185 (VLPR…SGLL). Residues 24-101 (TPKPTSSDGS…AVLALHLARQ (78 aa)) constitute a propeptide, extended MTS. A compositionally biased stretch (low complexity) spans 35–45 (TTSPTLPLTRL). Basic and acidic residues-rich tracts occupy residues 46-61 (SFDRSGSHGSKRSRDP) and 155-167 (GLREPRQGQEDHP). Residues 169-181 (APSQCLPSDSSLR) show a composition bias toward polar residues. 7 TPR repeats span residues 213–245 (AHPPGGKNEQDKAKALPLEEAVTSIQQLFQLSV), 246–278 (AITFNFLGTENIKTGDYTAAFSYFQKAADRGYS), 279–313 (KAQYNVGLCLEHGRGTPRDLSKAILFYHLAAVQGH), 314–351 (SLAQYRYARCLLQSPGSLSDPERERAVSLLKQAADSGL), 352–385 (TEAQAFLGVLFTKEPHLDEQRAVKYLWLAASNGD), 386–423 (SQSRFHLGICYEKGLGAQRNLGEAVKCYQQAAAMGNEP), and 471–499 (ASSTGNLGLLCRSGHLGASHGAPSRTIPS). Positions 307 to 326 (LAAVQGHSLAQYRYARCLLQ) match the SIFI-degron motif.

Belongs to the DELE1 family. Interacts with DAP3. As to quaternary structure, interacts (via TPR repeats) with EIF2AK1/HRI; activating the protein kinase activity of EIF2AK1/HRI, thereby promoting the integrated stress response (ISR). In terms of assembly, homooctamer; oligomerization is required to activate EIF2AK1/HRI. Interacts (via TPR repeats) with EIF2AK1/HRI; activating the protein kinase activity of EIF2AK1/HRI, thereby promoting the integrated stress response (ISR). In terms of processing, unstable protein in absence of stress: imported in the mitochondrial matrix following processing by the mitochondrial-processing peptidase (MPP), where it is degraded by LONP1. Stabilized in response to iron deficiency: iron deficiency impairs mitochondrial import, promoting localization at the mitochondrial surface and stabilization. Cleaved by OMA1 in response to mitochondrial stress, generating the DAP3-binding cell death enhancer 1 short form (DELE1(S) or S-DELE1) that accumulates in the cytosol and activates the protein kinase activity of EIF2AK1/HRI. Protein cleavage by OMA1 can take place at different positions, and apparently does not require a specific sequence motif. Post-translationally, ubiquitinated and degraded by the SIFI complex once the mitochondrial stress has been resolved, thereby providing stress response silencing. Within the SIFI complex, UBR4 initiates ubiquitin chain that are further elongated or branched by KCMF1.

It is found in the mitochondrion. Its subcellular location is the mitochondrion outer membrane. It localises to the mitochondrion inner membrane. The protein localises to the cytoplasm. The protein resides in the cytosol. Protein kinase activator that acts as a key activator of the integrated stress response (ISR) following various stresses, such as iron deficiency, mitochondrial stress or mitochondrial DNA breaks. Detects impaired protein import and processing in mitochondria, activating the ISR. May also required for the induction of death receptor-mediated apoptosis through the regulation of caspase activation. In terms of biological role, protein kinase activator that activates the ISR in response to iron deficiency: iron deficiency impairs mitochondrial import, promoting DELE1 localization at the mitochondrial surface, where it binds and activates EIF2AK1/HRI to trigger the ISR. Its function is as follows. Protein kinase activator generated by protein cleavage in response to mitochondrial stress, which accumulates in the cytosol and specifically binds to and activates the protein kinase activity of EIF2AK1/HRI. It thereby activates the integrated stress response (ISR): EIF2AK1/HRI activation promotes eIF-2-alpha (EIF2S1) phosphorylation, leading to a decrease in global protein synthesis and the induction of selected genes, including the transcription factor ATF4, the master transcriptional regulator of the ISR. Also acts as an activator of PRKN-independent mitophagy: activates the protein kinase activity of EIF2AK1/HRI in response to mitochondrial damage, promoting eIF-2-alpha (EIF2S1) phosphorylation, leading to mitochondrial localization of EIF2S1 followed by induction of mitophagy. The chain is DAP3-binding cell death enhancer 1 from Mus musculus (Mouse).